We begin with the raw amino-acid sequence, 432 residues long: Glutamyl-tRNA reductase (432 aa).

Residues 49–52 (TCNR), Ser-101, 106–108 (EPQ), and Gln-112 each bind substrate. The Nucleophile role is filled by Cys-50. 181 to 186 (GAGETI) lines the NADP(+) pocket. A disordered region spans residues 408-432 (PEKPGYRHPPVATPIVRTDDANPAP).

It belongs to the glutamyl-tRNA reductase family. As to quaternary structure, homodimer.

It carries out the reaction (S)-4-amino-5-oxopentanoate + tRNA(Glu) + NADP(+) = L-glutamyl-tRNA(Glu) + NADPH + H(+). The protein operates within porphyrin-containing compound metabolism; protoporphyrin-IX biosynthesis; 5-aminolevulinate from L-glutamyl-tRNA(Glu): step 1/2. In terms of biological role, catalyzes the NADPH-dependent reduction of glutamyl-tRNA(Glu) to glutamate 1-semialdehyde (GSA). The chain is Glutamyl-tRNA reductase from Xanthomonas campestris pv. campestris (strain B100).